The primary structure comprises 107 residues: MMKVLVVVALLVTHISYSSSEGIDDLEADELLSLMANEQTRKECIPKHHECTSNKHGCCRGNFFKYKCQCTTVVTQDGEQTERCFCGTPPHHKAAELVVGFGKKIFG.

An N-terminal signal peptide occupies residues Met-1 to Ser-20. A propeptide spanning residues Glu-21–Arg-41 is cleaved from the precursor. Disulfide bonds link Cys-44/Cys-59, Cys-51/Cys-68, Cys-58/Cys-86, and Cys-70/Cys-84.

Belongs to the neurotoxin 19 (CSTX) family. 04 (U1-Lctx) subfamily. In terms of tissue distribution, expressed by the venom gland.

The protein resides in the secreted. The polypeptide is U1-lycotoxin-Ls1b (Lycosa singoriensis (Wolf spider)).